Consider the following 114-residue polypeptide: Large ribosomal subunit protein bL19 (114 aa).

This sequence belongs to the bacterial ribosomal protein bL19 family.

Its function is as follows. This protein is located at the 30S-50S ribosomal subunit interface and may play a role in the structure and function of the aminoacyl-tRNA binding site. The chain is Large ribosomal subunit protein bL19 from Clostridium acetobutylicum (strain ATCC 824 / DSM 792 / JCM 1419 / IAM 19013 / LMG 5710 / NBRC 13948 / NRRL B-527 / VKM B-1787 / 2291 / W).